We begin with the raw amino-acid sequence, 380 residues long: Erythronate-4-phosphate dehydrogenase (380 aa).

2 residues coordinate substrate: Ser-45 and Thr-66. NAD(+)-binding positions include Asp-146, Thr-174, 205–207 (ASR), and Asp-231. The active site involves Arg-207. The active site involves Glu-236. His-253 serves as the catalytic Proton donor. Gly-256 lines the NAD(+) pocket. Tyr-257 provides a ligand contact to substrate.

This sequence belongs to the D-isomer specific 2-hydroxyacid dehydrogenase family. PdxB subfamily. In terms of assembly, homodimer.

Its subcellular location is the cytoplasm. The catalysed reaction is 4-phospho-D-erythronate + NAD(+) = (R)-3-hydroxy-2-oxo-4-phosphooxybutanoate + NADH + H(+). It participates in cofactor biosynthesis; pyridoxine 5'-phosphate biosynthesis; pyridoxine 5'-phosphate from D-erythrose 4-phosphate: step 2/5. Its function is as follows. Catalyzes the oxidation of erythronate-4-phosphate to 3-hydroxy-2-oxo-4-phosphonooxybutanoate. In Pseudomonas fluorescens (strain SBW25), this protein is Erythronate-4-phosphate dehydrogenase.